A 316-amino-acid chain; its full sequence is Pantothenate kinase (316 aa).

An ATP-binding site is contributed by 95–102 (GSVAVGKS).

The protein belongs to the prokaryotic pantothenate kinase family.

It localises to the cytoplasm. The catalysed reaction is (R)-pantothenate + ATP = (R)-4'-phosphopantothenate + ADP + H(+). It participates in cofactor biosynthesis; coenzyme A biosynthesis; CoA from (R)-pantothenate: step 1/5. This chain is Pantothenate kinase, found in Shigella sonnei (strain Ss046).